A 490-amino-acid chain; its full sequence is Cardiolipin synthase 1 (490 aa).

The next 2 helical transmembrane spans lie at 9 to 29 (ILTILLVVGFITNVVLAFVII) and 42 to 62 (WAWLFVLFVLPVIGFILYLFL). 2 consecutive PLD phosphodiesterase domains span residues 225–252 (MNNRNHRKIIIIDGQIGYIGGFNVGDDY) and 403–430 (QNGFIHSKILMIDDEISSIGSANMDFRS). Catalysis depends on residues histidine 230, lysine 232, aspartate 237, histidine 408, lysine 410, and aspartate 415.

The protein belongs to the phospholipase D family. Cardiolipin synthase subfamily.

Its subcellular location is the cell membrane. The catalysed reaction is 2 a 1,2-diacyl-sn-glycero-3-phospho-(1'-sn-glycerol) = a cardiolipin + glycerol. Catalyzes the reversible phosphatidyl group transfer from one phosphatidylglycerol molecule to another to form cardiolipin (CL) (diphosphatidylglycerol) and glycerol. The chain is Cardiolipin synthase 1 (cls1) from Staphylococcus epidermidis (strain ATCC 35984 / DSM 28319 / BCRC 17069 / CCUG 31568 / BM 3577 / RP62A).